A 356-amino-acid chain; its full sequence is Chorismate synthase (356 aa).

2 residues coordinate NADP(+): arginine 48 and arginine 54. FMN-binding positions include 125–127, 237–238, glycine 282, 297–301, and arginine 323; these read RSS, NA, and KPTSS.

Belongs to the chorismate synthase family. Homotetramer. FMNH2 is required as a cofactor.

The enzyme catalyses 5-O-(1-carboxyvinyl)-3-phosphoshikimate = chorismate + phosphate. Its pathway is metabolic intermediate biosynthesis; chorismate biosynthesis; chorismate from D-erythrose 4-phosphate and phosphoenolpyruvate: step 7/7. Catalyzes the anti-1,4-elimination of the C-3 phosphate and the C-6 proR hydrogen from 5-enolpyruvylshikimate-3-phosphate (EPSP) to yield chorismate, which is the branch point compound that serves as the starting substrate for the three terminal pathways of aromatic amino acid biosynthesis. This reaction introduces a second double bond into the aromatic ring system. This is Chorismate synthase from Rhizorhabdus wittichii (strain DSM 6014 / CCUG 31198 / JCM 15750 / NBRC 105917 / EY 4224 / RW1) (Sphingomonas wittichii).